Reading from the N-terminus, the 434-residue chain is Gamma-enolase (434 aa).

Positions 158 and 167 each coordinate substrate. The active-site Proton donor is E210. 3 residues coordinate Mg(2+): D245, E293, and D318. Substrate-binding residues include E293 and D318. The active-site Proton acceptor is K343. Residues 370–373 and K394 contribute to the substrate site; that span reads SHRS.

Belongs to the enolase family. Homodimer. Mg(2+) serves as cofactor. Expressed in the brain and, to much less but significant extents, in the pituitary and adrenal glands.

The protein resides in the cytoplasm. The catalysed reaction is (2R)-2-phosphoglycerate = phosphoenolpyruvate + H2O. The protein operates within carbohydrate degradation; glycolysis; pyruvate from D-glyceraldehyde 3-phosphate: step 4/5. The chain is Gamma-enolase (ENO2) from Gallus gallus (Chicken).